The following is a 428-amino-acid chain: Histidine--tRNA ligase (428 aa).

Belongs to the class-II aminoacyl-tRNA synthetase family. Homodimer.

It is found in the cytoplasm. The catalysed reaction is tRNA(His) + L-histidine + ATP = L-histidyl-tRNA(His) + AMP + diphosphate + H(+). This is Histidine--tRNA ligase (hisS) from Chlamydia muridarum (strain MoPn / Nigg).